A 163-amino-acid polypeptide reads, in one-letter code: Nucleotide-binding protein YajQ (163 aa).

It belongs to the YajQ family.

Functionally, nucleotide-binding protein. This is Nucleotide-binding protein YajQ from Salmonella paratyphi A (strain ATCC 9150 / SARB42).